A 78-amino-acid polypeptide reads, in one-letter code: MSRVCQVTGKRPAVGNNRSHAMNATRRRFLPNLHTHRFWVESEKRFVTLRLTAKGMRIIDKKGIDAVLAEIRARGEKI.

The protein belongs to the bacterial ribosomal protein bL28 family.

This Histophilus somni (strain 129Pt) (Haemophilus somnus) protein is Large ribosomal subunit protein bL28.